The following is a 485-amino-acid chain: Cysteine--tRNA ligase (485 aa).

Cys27 contacts Zn(2+). The short motif at 29 to 39 is the 'HIGH' region element; it reads ITAYDLCHIGH. Zn(2+)-binding residues include Cys208, His233, and Glu237. Residues 265–269 carry the 'KMSKS' region motif; that stretch reads KMSKS. Lys268 contributes to the ATP binding site.

Belongs to the class-I aminoacyl-tRNA synthetase family. As to quaternary structure, monomer. Zn(2+) is required as a cofactor.

The protein resides in the cytoplasm. The catalysed reaction is tRNA(Cys) + L-cysteine + ATP = L-cysteinyl-tRNA(Cys) + AMP + diphosphate. This is Cysteine--tRNA ligase from Nitratidesulfovibrio vulgaris (strain DP4) (Desulfovibrio vulgaris).